The chain runs to 155 residues: uncharacterized protein (155 aa).

Disordered stretches follow at residues 1 to 22 and 110 to 155; these read MSSQ…TFTF and NKEP…DTQA. At S2 the chain carries N-acetylserine. A phosphoserine mark is found at S136, S144, and S146. Positions 136 to 155 are enriched in acidic residues; it reads SDEDLDAESDSDGEDGDTQA.

This is an uncharacterized protein from Mus musculus (Mouse).